A 278-amino-acid chain; its full sequence is Large ribosomal subunit protein uL2 (278 aa).

Residues 223–278 (GSVMNPNDHPHGGGEGKAPIGHPSPMSPWGKKTLGKKTRDHKAKSEKFIVRHRRAK) are disordered. Over residues 255 to 264 (TLGKKTRDHK) the composition is skewed to basic residues.

Belongs to the universal ribosomal protein uL2 family. In terms of assembly, part of the 50S ribosomal subunit. Forms a bridge to the 30S subunit in the 70S ribosome.

Its function is as follows. One of the primary rRNA binding proteins. Required for association of the 30S and 50S subunits to form the 70S ribosome, for tRNA binding and peptide bond formation. It has been suggested to have peptidyltransferase activity; this is somewhat controversial. Makes several contacts with the 16S rRNA in the 70S ribosome. This is Large ribosomal subunit protein uL2 from Lacticaseibacillus paracasei (strain ATCC 334 / BCRC 17002 / CCUG 31169 / CIP 107868 / KCTC 3260 / NRRL B-441) (Lactobacillus paracasei).